The sequence spans 472 residues: ATP synthase subunit beta (472 aa).

156–163 contacts ATP; it reads GGAGVGKT.

This sequence belongs to the ATPase alpha/beta chains family. In terms of assembly, F-type ATPases have 2 components, CF(1) - the catalytic core - and CF(0) - the membrane proton channel. CF(1) has five subunits: alpha(3), beta(3), gamma(1), delta(1), epsilon(1). CF(0) has three main subunits: a(1), b(2) and c(9-12). The alpha and beta chains form an alternating ring which encloses part of the gamma chain. CF(1) is attached to CF(0) by a central stalk formed by the gamma and epsilon chains, while a peripheral stalk is formed by the delta and b chains.

Its subcellular location is the cell membrane. The catalysed reaction is ATP + H2O + 4 H(+)(in) = ADP + phosphate + 5 H(+)(out). In terms of biological role, produces ATP from ADP in the presence of a proton gradient across the membrane. The catalytic sites are hosted primarily by the beta subunits. The chain is ATP synthase subunit beta from Symbiobacterium thermophilum (strain DSM 24528 / JCM 14929 / IAM 14863 / T).